Reading from the N-terminus, the 235-residue chain is Peptidyl-tRNA hydrolase (235 aa).

Tyrosine 14 contributes to the tRNA binding site. Catalysis depends on histidine 19, which acts as the Proton acceptor. 3 residues coordinate tRNA: phenylalanine 64, asparagine 66, and asparagine 112. Positions 188–235 (APARNSGTRPDNPGKGSPEKPAAKPANDPIAEPPSLSDRLRALTERFR) are disordered. Basic and acidic residues predominate over residues 225 to 235 (DRLRALTERFR).

Belongs to the PTH family. In terms of assembly, monomer.

Its subcellular location is the cytoplasm. It catalyses the reaction an N-acyl-L-alpha-aminoacyl-tRNA + H2O = an N-acyl-L-amino acid + a tRNA + H(+). Its function is as follows. Hydrolyzes ribosome-free peptidyl-tRNAs (with 1 or more amino acids incorporated), which drop off the ribosome during protein synthesis, or as a result of ribosome stalling. In terms of biological role, catalyzes the release of premature peptidyl moieties from peptidyl-tRNA molecules trapped in stalled 50S ribosomal subunits, and thus maintains levels of free tRNAs and 50S ribosomes. The polypeptide is Peptidyl-tRNA hydrolase (Paracoccus denitrificans (strain Pd 1222)).